A 272-amino-acid chain; its full sequence is Putative pyruvate, phosphate dikinase regulatory protein (272 aa).

149-156 (GVSRTSKT) contributes to the ADP binding site.

This sequence belongs to the pyruvate, phosphate/water dikinase regulatory protein family. PDRP subfamily.

It catalyses the reaction N(tele)-phospho-L-histidyl/L-threonyl-[pyruvate, phosphate dikinase] + ADP = N(tele)-phospho-L-histidyl/O-phospho-L-threonyl-[pyruvate, phosphate dikinase] + AMP + H(+). It carries out the reaction N(tele)-phospho-L-histidyl/O-phospho-L-threonyl-[pyruvate, phosphate dikinase] + phosphate + H(+) = N(tele)-phospho-L-histidyl/L-threonyl-[pyruvate, phosphate dikinase] + diphosphate. In terms of biological role, bifunctional serine/threonine kinase and phosphorylase involved in the regulation of the pyruvate, phosphate dikinase (PPDK) by catalyzing its phosphorylation/dephosphorylation. This is Putative pyruvate, phosphate dikinase regulatory protein from Lactiplantibacillus plantarum (strain ATCC BAA-793 / NCIMB 8826 / WCFS1) (Lactobacillus plantarum).